Consider the following 127-residue polypeptide: Holotricin-2 (127 aa).

Positions 1–15 (MMKLVIALCLIGISA) are cleaved as a signal peptide. Positions 16–55 (AYVVPVYYEIYPEDATFDEADIEPQLSPAELHHGSIRERR) are excised as a propeptide. The segment at 43–84 (PAELHHGSIRERRSLQPGAPSFPMPGSQLPTSVSGNVEKQGR) is disordered. A compositionally biased stretch (basic and acidic residues) spans 45–56 (ELHHGSIRERRS). Over residues 70-84 (QLPTSVSGNVEKQGR) the composition is skewed to polar residues.

The protein belongs to the coleoptericin family. As to expression, hemolymph.

It localises to the secreted. Functionally, antibacterial activity against Gram-negative bacteria but not against Gram-positive bacteria. The protein is Holotricin-2 of Holotrichia diomphalia (Korean black chafer).